A 58-amino-acid chain; its full sequence is Potassium channel toxin alpha-KTx 1.6 (58 aa).

The N-terminal stretch at 1–21 (MKISFLLLLAIVICSIGWTEA) is a signal peptide. Glutamine 22 bears the Pyrrolidone carboxylic acid mark. 3 cysteine pairs are disulfide-bonded: cysteine 28-cysteine 49, cysteine 34-cysteine 54, and cysteine 38-cysteine 56.

It belongs to the short scorpion toxin superfamily. Potassium channel inhibitor family. Alpha-KTx 01 subfamily. Expressed by the venom gland.

It is found in the secreted. Potent blocker of both large-conductance calcium-activated potassium channels (KCa1.1/KCNMA1) and voltage-gated potassium channels (Kv1.3/KCNA3 and ERG1/Kv11.1/KCNH2). The chain is Potassium channel toxin alpha-KTx 1.6 from Olivierus martensii (Manchurian scorpion).